The chain runs to 240 residues: Uridylate kinase (240 aa).

Residue 12 to 15 (KLSG) participates in ATP binding. Residue G54 participates in UMP binding. ATP contacts are provided by G55 and R59. UMP-binding positions include D74 and 135–142 (TGNPFFTT). Residues T162, Y168, and D171 each contribute to the ATP site.

The protein belongs to the UMP kinase family. As to quaternary structure, homohexamer.

Its subcellular location is the cytoplasm. The catalysed reaction is UMP + ATP = UDP + ADP. It functions in the pathway pyrimidine metabolism; CTP biosynthesis via de novo pathway; UDP from UMP (UMPK route): step 1/1. With respect to regulation, inhibited by UTP. Functionally, catalyzes the reversible phosphorylation of UMP to UDP. The sequence is that of Uridylate kinase from Xanthomonas campestris pv. campestris (strain ATCC 33913 / DSM 3586 / NCPPB 528 / LMG 568 / P 25).